Consider the following 998-residue polypeptide: Mediator of RNA polymerase II transcription subunit 14 (998 aa).

The protein belongs to the Mediator complex subunit 14 family. Component of the Mediator complex.

It is found in the nucleus. Its function is as follows. Component of the Mediator complex, a coactivator involved in the regulated transcription of nearly all RNA polymerase II-dependent genes. Mediator functions as a bridge to convey information from gene-specific regulatory proteins to the basal RNA polymerase II transcription machinery. Mediator is recruited to promoters by direct interactions with regulatory proteins and serves as a scaffold for the assembly of a functional preinitiation complex with RNA polymerase II and the general transcription factors. This chain is Mediator of RNA polymerase II transcription subunit 14 (RGR1), found in Kluyveromyces lactis (strain ATCC 8585 / CBS 2359 / DSM 70799 / NBRC 1267 / NRRL Y-1140 / WM37) (Yeast).